Consider the following 485-residue polypeptide: MASTGPTNIQEKTTCPVCQELLTKALSLGCGHLVCQACLISNKNAVINPRGKSSCPVCGTRFSLENLQANKHLANVVERLGEVKLKPDIGTKRDLCVHHGEKLLLFCKEDKKVICWVCERSQEHRGHHTFLWEEAVRECQENLQKALTRLRKEQEKVETLEADIKEDRLSWKRQVQTERQRIQTGFNQLRRILDKEEQRELKRLREEEQMILDSLAGAEAELAQQSQLVEELISDLELRREWSDTELLQDMSGILKWSQIWTLKKPKAVSKKLSMVFQAPDLSGMLQKFRELSAVRAYWDNFTFNPENLNLNLILSEDHRQVTSVSIWPFKCCNNGILGSKCFSSGKHYWEVDVSEKNAWTLGVYTRKRTLRFDVRQRKGQPNGYHRYKPQNGYWVIGLQHGSKYSIFEDSSNCDPTVLNPFVATPLHRVGIFLDCEEGTVSFLNVTNHGSLIYKFSQCCFSQPAYPYFNPWDCPAPMTLCPLNS.

An RING-type zinc finger spans residues 15-58 (CPVCQELLTKALSLGCGHLVCQACLISNKNAVINPRGKSSCPVC). The B box-type zinc finger occupies 91–127 (TKRDLCVHHGEKLLLFCKEDKKVICWVCERSQEHRGH). Zn(2+)-binding residues include C96, H99, C118, and H124. Positions 136 to 170 (VRECQENLQKALTRLRKEQEKVETLEADIKEDRLS) form a coiled coil. In terms of domain architecture, B30.2/SPRY spans 282–485 (LSGMLQKFRE…APMTLCPLNS (204 aa)).

Belongs to the TRIM/RBCC family. Homotrimer. Interacts (via B-box and SPRY domain) with TRIM5.

Its subcellular location is the cytoplasm. It localises to the mitochondrion. The enzyme catalyses S-ubiquitinyl-[E2 ubiquitin-conjugating enzyme]-L-cysteine + [acceptor protein]-L-lysine = [E2 ubiquitin-conjugating enzyme]-L-cysteine + N(6)-ubiquitinyl-[acceptor protein]-L-lysine.. It participates in protein modification; protein ubiquitination. Functionally, functions as antiviral protein and contributes to the defense against retroviral infections. Acts as a capsid-specific restriction factor with the help of TRIM5 and prevents infection from non-host-adapted retroviruses. During influenza A virus infection, promotes programmed cell death by targeting ZBP1 for 'Lys-63'-linked polyubiquitination. In turn, promotes ZBP1 recruitment of RIPK3 to mediate virus-induced programmed necrosis. Negatively regulates the function of mitochondria by enhancing mitochondrial depolarization leading to cytochrome c release and mitochondria-dependent apoptosis. Also promotes the formation of multinucleated giant cells by means of cell fusion and phagocytosis in epithelial cells. Regulates intestinal inflammation by controlling the exocytosis of the major component of colonic mucus MUC2 from colonic goblet cells. This chain is E3 ubiquitin-protein ligase TRIM34B, found in Mus musculus (Mouse).